The sequence spans 338 residues: Glyceraldehyde-3-phosphate dehydrogenase, cytosolic (338 aa).

Residues 2–153 (ADKKIKIGIN…YKSDLNIVSN (152 aa)) form a binding to NAD region. Residues 15-16 (RI) and Asp-37 each bind NAD(+). The external loop stretch occupies residues 56 to 75 (GQWKHNELKVKDEKTLLFGE). Arg-84 lines the NAD(+) pocket. Positions 154–338 (ASCTTNCLAP…VDLIIHMSKA (185 aa)) are catalytic. A D-glyceraldehyde 3-phosphate-binding site is contributed by 155-157 (SCT). Cys-156 (nucleophile) is an active-site residue. Cys-156 and Cys-160 each carry S-nitrosocysteine. The tract at residues 183-206 (HSITATQKTVDGPSMKDWRGGRAA) is S-loop. D-glyceraldehyde 3-phosphate-binding positions include Thr-186, 215 to 216 (TG), and Arg-238. An NAD(+)-binding site is contributed by Asn-320.

Belongs to the glyceraldehyde-3-phosphate dehydrogenase family. As to quaternary structure, homotetramer.

It localises to the cytoplasm. It carries out the reaction D-glyceraldehyde 3-phosphate + phosphate + NAD(+) = (2R)-3-phospho-glyceroyl phosphate + NADH + H(+). It participates in carbohydrate degradation; glycolysis; pyruvate from D-glyceraldehyde 3-phosphate: step 1/5. In terms of biological role, key enzyme in glycolysis that catalyzes the first step of the pathway by converting D-glyceraldehyde 3-phosphate (G3P) into 3-phospho-D-glyceroyl phosphate. Essential for the maintenance of cellular ATP levels and carbohydrate metabolism. This is Glyceraldehyde-3-phosphate dehydrogenase, cytosolic (GAPC) from Sinapis alba (White mustard).